Reading from the N-terminus, the 242-residue chain is tRNA (guanine-N(1)-)-methyltransferase (242 aa).

Residues glycine 109 and 129-134 (LGDFVL) each bind S-adenosyl-L-methionine.

Belongs to the RNA methyltransferase TrmD family. As to quaternary structure, homodimer.

Its subcellular location is the cytoplasm. The catalysed reaction is guanosine(37) in tRNA + S-adenosyl-L-methionine = N(1)-methylguanosine(37) in tRNA + S-adenosyl-L-homocysteine + H(+). Its function is as follows. Specifically methylates guanosine-37 in various tRNAs. This Exiguobacterium sibiricum (strain DSM 17290 / CCUG 55495 / CIP 109462 / JCM 13490 / 255-15) protein is tRNA (guanine-N(1)-)-methyltransferase.